The chain runs to 100 residues: Small ribosomal subunit protein bS20 (100 aa).

It belongs to the bacterial ribosomal protein bS20 family.

In terms of biological role, binds directly to 16S ribosomal RNA. The polypeptide is Small ribosomal subunit protein bS20 (Prochlorococcus marinus (strain MIT 9211)).